We begin with the raw amino-acid sequence, 536 residues long: Glyco-Gag protein (536 aa).

Topologically, residues 1–54 (MSGASSGTATGARLFGISSVLGEYRVLIGDEGAGPSRSPSEVSFSVWYRSRAAR) are cytoplasmic. Residues 55–75 (LVILCLVASFLVPCLTFLIAE) traverse the membrane as a helical segment. Topologically, residues 76–536 (TVMGQTVTTP…TQNRNKDREE (461 aa)) are extracellular. N-linked (GlcNAc...) asparagine; by host glycosylation occurs at Asn137. Disordered regions lie at residues 174 to 284 (VRPF…NNRP) and 494 to 536 (ETPE…DREE). Residues 177–198 (FLPPPKPPTPLPQPLSPQPSAP) show a composition bias toward pro residues. Low complexity predominate over residues 199–209 (PTSSLYPVLPK). Pro residues-rich tracts occupy residues 210–223 (TNPP…PDPS) and 233–246 (EPPP…PPPS). A compositionally biased stretch (basic and acidic residues) spans 494–511 (ETPEEREERLWQRQEERD).

Post-translationally, glycosylated by host. Cleaved by host near the middle of the molecule, releasing the c-terminal half containing capsid and nucleoprotein domains op GAG.

Its subcellular location is the host cell membrane. Its function is as follows. Plays a role in viral particle release. Presumably acts by facilitating the fission of the virion bud at the cell surface. This chain is Glyco-Gag protein, found in Feline sarcoma virus (strain McDonough).